The following is a 189-amino-acid chain: Stathmin-4 (189 aa).

2 S-palmitoyl cysteine lipidation sites follow: Cys20 and Cys22. Positions 48-189 (SDMEVIELNK…NKELKEEASR (142 aa)) constitute an SLD domain. 2 positions are modified to phosphoserine: Glu54 and Ser90. Positions 90–189 (SLEEIQKKLE…NKELKEEASR (100 aa)) form a coiled coil. Residues 168–189 (QEKDKHAEEVRKNKELKEEASR) form a disordered region.

This sequence belongs to the stathmin family. As to expression, nervous tissue.

It is found in the golgi apparatus. Its subcellular location is the cell projection. The protein localises to the growth cone. The protein resides in the axon. Functionally, exhibits microtubule-destabilizing activity. In Rattus norvegicus (Rat), this protein is Stathmin-4 (Stmn4).